The primary structure comprises 131 residues: Small ribosomal subunit protein eS8 (131 aa).

The tract at residues 1-38 (MKLGAYYKGGDLKKPSGGKKRKVRRTKKKALGGGPPQI) is disordered. The span at 16–30 (SGGKKRKVRRTKKKA) shows a compositional bias: basic residues.

The protein belongs to the eukaryotic ribosomal protein eS8 family. In terms of assembly, part of the 30S ribosomal subunit.

This is Small ribosomal subunit protein eS8 from Pyrobaculum arsenaticum (strain DSM 13514 / JCM 11321 / PZ6).